We begin with the raw amino-acid sequence, 254 residues long: Nickel import ATP-binding protein NikD (254 aa).

Residues 2 to 241 (PQQIELRNIA…PKHAVTRSLV (240 aa)) form the ABC transporter domain. Residue 36–43 (GGSGSGKS) participates in ATP binding.

It belongs to the ABC transporter superfamily. Nickel importer (TC 3.A.1.5.3) family. The complex is composed of two ATP-binding proteins (NikD and NikE), two transmembrane proteins (NikB and NikC) and a solute-binding protein (NikA).

The protein resides in the cell inner membrane. It catalyses the reaction Ni(2+)(out) + ATP + H2O = Ni(2+)(in) + ADP + phosphate + H(+). In terms of biological role, part of the ABC transporter complex NikABCDE involved in nickel import. Responsible for energy coupling to the transport system. The sequence is that of Nickel import ATP-binding protein NikD from Shigella sonnei (strain Ss046).